Here is a 421-residue protein sequence, read N- to C-terminus: Serine/threonine-protein kinase OXI1 (421 aa).

One can recognise a Protein kinase domain in the interval 17 to 329; that stretch reads LEVLSLLGRG…VEEIKGHDFF (313 aa). Residues 23–31 and K45 contribute to the ATP site; that span reads LGRGAKGVV. D149 acts as the Proton acceptor in catalysis. Residues 167 to 246 form an activation loop region; the sequence is DFDLSTNLAP…VGTEEYVAPE (80 aa). Residue S235 is modified to Phosphoserine; by PDPK1. The AGC-kinase C-terminal domain occupies 330–421; the sequence is RGVDWEKVIL…LESDNNFLVF (92 aa). The PIF motif lies at 418–421; it reads FLVF.

It belongs to the protein kinase superfamily. AGC Ser/Thr protein kinase family. Interacts with PDK1 and PDK2. As to expression, expressed in roots and root hair cells.

The catalysed reaction is L-seryl-[protein] + ATP = O-phospho-L-seryl-[protein] + ADP + H(+). It catalyses the reaction L-threonyl-[protein] + ATP = O-phospho-L-threonyl-[protein] + ADP + H(+). Activated in response to hydrogen peroxide and cellulase elicitor. Activated by PDK1 in a phosphatidic acid dependent manner. Involved in oxidative burst-mediated signaling. Required for basal resistance to P.parasitica infection and root hair growth. Partly required for the activation of MPK3 and MPK6 by hydrogen peroxide and cellulase elicitor. In Arabidopsis thaliana (Mouse-ear cress), this protein is Serine/threonine-protein kinase OXI1.